A 256-amino-acid chain; its full sequence is Major prion protein (256 aa).

Residues 1–24 form the signal peptide; sequence MVKSHIGSWILVLFVAMWSDVGLC. Residues 25-41 are interaction with ADGRG6; it reads KKRPKPGGGWNTGGSRY. An interaction with GRB2, ERI3 and SYN1 region spans residues 25–233; that stretch reads KKRPKPGGGW…ESEAYYQRRA (209 aa). Residues 28 to 110 form a disordered region; it reads PKPGGGWNTG…QWNKPSKPKT (83 aa). 5 tandem repeats follow at residues 54–62, 63–70, 71–78, 79–86, and 87–95. The 5 X 8 AA tandem repeats of P-H-G-G-G-W-G-Q stretch occupies residues 54-95; the sequence is PQGGGGWGQPHGGGWGQPHGGGWGQPHGGGWGQPHGGGGWGQ. The span at 55–97 shows a compositional bias: gly residues; sequence QGGGGWGQPHGGGWGQPHGGGWGQPHGGGWGQPHGGGGWGQGG. 12 residues coordinate Cu(2+): H64, G65, G66, H72, G73, G74, H80, G81, G82, H88, G90, and G91. C182 and C217 are disulfide-bonded. N-linked (GlcNAc...) asparagine glycosylation is found at N184 and N200. A lipid anchor (GPI-anchor amidated alanine) is attached at A233. A propeptide spans 234–256 (removed in mature form); it reads SAILFSSPPVILLISFLIFLIVG.

The protein belongs to the prion family. Monomer and homodimer. Has a tendency to aggregate into amyloid fibrils containing a cross-beta spine, formed by a steric zipper of superposed beta-strands. Soluble oligomers may represent an intermediate stage on the path to fibril formation. Copper binding may promote oligomerization. Interacts with GRB2, APP, ERI3/PRNPIP and SYN1. Mislocalized cytosolically exposed PrP interacts with MGRN1; this interaction alters MGRN1 subcellular location and causes lysosomal enlargement. Interacts with APP. Interacts with KIAA1191. Interacts with ADGRG6.

Its subcellular location is the cell membrane. The protein resides in the golgi apparatus. Functionally, its primary physiological function is unclear. May play a role in neuronal development and synaptic plasticity. May be required for neuronal myelin sheath maintenance. May promote myelin homeostasis through acting as an agonist for ADGRG6 receptor. May play a role in iron uptake and iron homeostasis. Soluble oligomers are toxic to cultured neuroblastoma cells and induce apoptosis (in vitro). Association with GPC1 (via its heparan sulfate chains) targets PRNP to lipid rafts. Also provides Cu(2+) or Zn(2+) for the ascorbate-mediated GPC1 deaminase degradation of its heparan sulfate side chains. This chain is Major prion protein (PRNP), found in Felis catus (Cat).